The sequence spans 1184 residues: von Willebrand factor A domain-containing protein 3A (1184 aa).

Positions 1 to 24 (MKKYRKISIGCFAMATQTSHVFHG) are cleaved as a signal peptide. A disordered region spans residues 40-62 (GRDSKKPLKQKNMNGLGQNSDNG). A compositionally biased stretch (polar residues) spans 50-62 (KNMNGLGQNSDNG). Positions 333–357 (TSRDMDELLAEIQKAQSLLSHVQAL) form a coiled coil. Residues 511 to 708 (RVVVLLDISA…SIMSEMEKAL (198 aa)) enclose the VWFA 1 domain. An N-linked (GlcNAc...) asparagine glycan is attached at N709. The segment at 729-780 (LGSSALPKEKPKTLQLRSQPKKLCPPRPTVPLGARMSIKDDPDREKSPPLKS) is disordered. Basic and acidic residues predominate over residues 765-776 (SIKDDPDREKSP). One can recognise a VWFA 2 domain in the interval 959 to 1131 (KVCILLDTSG…KIHSLLTKGF (173 aa)).

It localises to the secreted. This Homo sapiens (Human) protein is von Willebrand factor A domain-containing protein 3A (VWA3A).